Here is a 150-residue protein sequence, read N- to C-terminus: Protein-export protein SecB (150 aa).

The protein belongs to the SecB family. Homotetramer, a dimer of dimers. One homotetramer interacts with 1 SecA dimer.

It is found in the cytoplasm. Functionally, one of the proteins required for the normal export of preproteins out of the cell cytoplasm. It is a molecular chaperone that binds to a subset of precursor proteins, maintaining them in a translocation-competent state. It also specifically binds to its receptor SecA. The protein is Protein-export protein SecB of Acidovorax ebreus (strain TPSY) (Diaphorobacter sp. (strain TPSY)).